A 50-amino-acid polypeptide reads, in one-letter code: Disintegrin pyramidin-A (50 aa).

The 47-residue stretch at 1–47 folds into the Disintegrin domain; that stretch reads DCASGPCCRDCKFLKEGTICKRARGDNMDDYCNGKTCDCPRNPHKGE. 4 disulfides stabilise this stretch: Cys-2-Cys-11, Cys-7-Cys-32, Cys-8-Cys-37, and Cys-20-Cys-39. The Cell attachment site signature appears at 24–26; it reads RGD.

This sequence belongs to the venom metalloproteinase (M12B) family. P-II subfamily. P-IIa sub-subfamily. Monomer (disintegrin). As to expression, expressed by the venom gland.

The protein localises to the secreted. Its function is as follows. Inhibits ADP-induced human platelet aggregation. The sequence is that of Disintegrin pyramidin-A from Echis pyramidum leakeyi (Leakey's carpet viper).